We begin with the raw amino-acid sequence, 109 residues long: uncharacterized protein (109 aa).

Its subcellular location is the mitochondrion. This is an uncharacterized protein from Saccharomyces cerevisiae (strain ATCC 204508 / S288c) (Baker's yeast).